The sequence spans 149 residues: Major outer capsid protein (149 aa).

In terms of assembly, homotrimer.

Its subcellular location is the virion. In terms of biological role, assembles to form an icosahedral capsid with a T=13 symmetry. Drives the penetration of the inner capsid (core) into the cytoplasm. The sequence is that of Major outer capsid protein (P8) from Pseudomonas phage phi6 (Bacteriophage phi-6).